The following is a 540-amino-acid chain: 2,3-bisphosphoglycerate-independent phosphoglycerate mutase (540 aa).

Mn(2+) is bound by residues Asp-24 and Ser-74. Residue Ser-74 is the Phosphoserine intermediate of the active site. Residues His-135, 165-166 (RD), Arg-197, Arg-203, 268-271 (RPDR), and Lys-341 each bind substrate. The Mn(2+) site is built by Asp-408, His-412, Asp-449, His-450, and His-467.

It belongs to the BPG-independent phosphoglycerate mutase family. As to quaternary structure, monomer. Requires Mn(2+) as cofactor.

The enzyme catalyses (2R)-2-phosphoglycerate = (2R)-3-phosphoglycerate. It functions in the pathway carbohydrate degradation; glycolysis; pyruvate from D-glyceraldehyde 3-phosphate: step 3/5. Its function is as follows. Catalyzes the interconversion of 2-phosphoglycerate and 3-phosphoglycerate. The protein is 2,3-bisphosphoglycerate-independent phosphoglycerate mutase of Prochlorococcus marinus (strain MIT 9303).